Reading from the N-terminus, the 583-residue chain is Proline--tRNA ligase (583 aa).

This sequence belongs to the class-II aminoacyl-tRNA synthetase family. ProS type 1 subfamily. Homodimer.

It localises to the cytoplasm. The catalysed reaction is tRNA(Pro) + L-proline + ATP = L-prolyl-tRNA(Pro) + AMP + diphosphate. In terms of biological role, catalyzes the attachment of proline to tRNA(Pro) in a two-step reaction: proline is first activated by ATP to form Pro-AMP and then transferred to the acceptor end of tRNA(Pro). As ProRS can inadvertently accommodate and process non-cognate amino acids such as alanine and cysteine, to avoid such errors it has two additional distinct editing activities against alanine. One activity is designated as 'pretransfer' editing and involves the tRNA(Pro)-independent hydrolysis of activated Ala-AMP. The other activity is designated 'posttransfer' editing and involves deacylation of mischarged Ala-tRNA(Pro). The misacylated Cys-tRNA(Pro) is not edited by ProRS. The polypeptide is Proline--tRNA ligase (Aromatoleum aromaticum (strain DSM 19018 / LMG 30748 / EbN1) (Azoarcus sp. (strain EbN1))).